The following is a 250-amino-acid chain: NH(3)-dependent NAD(+) synthetase (250 aa).

ATP is bound at residue 31–38; sequence GISGGIDS. Asp37 is a Mg(2+) binding site. Arg122 lines the deamido-NAD(+) pocket. Thr142 lines the ATP pocket. Residue Glu147 participates in Mg(2+) binding. Residues Lys155 and Asp162 each contribute to the deamido-NAD(+) site. Positions 171 and 193 each coordinate ATP. 239-240 is a deamido-NAD(+) binding site; that stretch reads HK.

The protein belongs to the NAD synthetase family. As to quaternary structure, homodimer.

It carries out the reaction deamido-NAD(+) + NH4(+) + ATP = AMP + diphosphate + NAD(+) + H(+). The protein operates within cofactor biosynthesis; NAD(+) biosynthesis; NAD(+) from deamido-NAD(+) (ammonia route): step 1/1. Catalyzes the ATP-dependent amidation of deamido-NAD to form NAD. Uses ammonia as a nitrogen source. The sequence is that of NH(3)-dependent NAD(+) synthetase from Alkaliphilus oremlandii (strain OhILAs) (Clostridium oremlandii (strain OhILAs)).